Here is a 116-residue protein sequence, read N- to C-terminus: Putative transmembrane protein ORF116 (116 aa).

3 helical membrane-spanning segments follow: residues 20–40 (IVTL…AYAL), 53–73 (LLGG…TNSI), and 76–96 (FRGA…DVIN).

The protein resides in the host membrane. This chain is Putative transmembrane protein ORF116, found in Acidianus bottle-shaped virus (isolate Italy/Pozzuoli) (ABV).